The sequence spans 249 residues: ATP synthase subunit a, chloroplastic (249 aa).

The next 5 membrane-spanning stretches (helical) occupy residues 40–60 (QVLITSWVVIAILLGSAIVAV), 97–117 (VPFIGTMFLFIFVSNWAGALL), 136–156 (INTTVALALLTSIAYFYAGLS), 201–221 (LVVVVLVSLVPSVVPIPVMFL), and 222–242 (GLFTSGIQALIFATLAAAYIG).

Belongs to the ATPase A chain family. F-type ATPases have 2 components, CF(1) - the catalytic core - and CF(0) - the membrane proton channel. CF(1) has five subunits: alpha(3), beta(3), gamma(1), delta(1), epsilon(1). CF(0) has four main subunits: a, b, b' and c.

The protein resides in the plastid. It localises to the chloroplast thylakoid membrane. Functionally, key component of the proton channel; it plays a direct role in the translocation of protons across the membrane. This Manihot esculenta (Cassava) protein is ATP synthase subunit a, chloroplastic.